Here is a 471-residue protein sequence, read N- to C-terminus: uncharacterized protein (471 aa).

11 consecutive transmembrane segments (helical) span residues 15 to 35 (LWGPPLIILLTGTGLYFTILL), 66 to 86 (PLQALTSALSSTIGAANIVGV), 89 to 109 (AIMFGGPGAVFWMWLIALFAM), 147 to 167 (WLGVFFSVALIVELIPSIMVQ), 179 to 199 (FSFNKIYAGIGIAFLIGLVVI), 210 to 230 (EFVVPLMAGAYAGAGLLIVLM), 237 to 257 (AFFSLVFSNAFTSSSAVGGFA), 303 to 323 (VIGIVIDTLIICTTTAFIVLA), 353 to 373 (GYFVSVSLVFFVVSTIMVVIF), 386 to 406 (LAGHVIKFVYLAAIIIGAAGG), and 410 to 430 (IWGVLDLALVFIVVPNVIALL).

The protein belongs to the alanine or glycine:cation symporter (AGCS) (TC 2.A.25) family.

The protein localises to the cell membrane. This is an uncharacterized protein from Bacillus subtilis (strain 168).